A 499-amino-acid chain; its full sequence is Circadian clock oscillator protein KaiC (499 aa).

KaiC domains lie at methionine 1–phenylalanine 243 and valine 257–alanine 499. Residues glycine 45, threonine 46, glycine 47, lysine 48, threonine 49, serine 85, lysine 220, leucine 221, arginine 222, threonine 224, histidine 226, threonine 286, glycine 287, threonine 288, glycine 289, lysine 290, threonine 291, and leucine 292 each contribute to the ATP site. Residue threonine 49 participates in Mg(2+) binding. Residue threonine 291 coordinates Mg(2+). Mg(2+) is bound at residue glutamate 314. Tryptophan 327 provides a ligand contact to ATP. Serine 427 is subject to Phosphoserine; by autocatalysis. Phosphothreonine; by autocatalysis is present on threonine 428. Positions 447, 453, 454, 455, 457, 459, and 461 each coordinate ATP.

This sequence belongs to the KaiC family. Homohexamer; hexamerization is dependent on ATP-binding. Component of the KaiBC complex. KaiC interacts with SasA, activating its autokinase function and leading to RpaA activation. Mg(2+) is required as a cofactor. Post-translationally, phosphorylated on serine and threonine residues by autocatalysis. Has a 4 step phosphorylation cycle; the autokinase acts first on Thr-428, then Ser-427. When Ser-427 is modified KaiC switches to an autophosphatase mode, acting first on phospho-Thr-428 then phospho-Ser-427.

It carries out the reaction L-seryl-[protein] + ATP = O-phospho-L-seryl-[protein] + ADP + H(+). It catalyses the reaction L-threonyl-[protein] + ATP = O-phospho-L-threonyl-[protein] + ADP + H(+). The enzyme catalyses ATP + H2O = ADP + phosphate + H(+). Central component of the KaiBC oscillator complex, which constitutes the main circadian regulator in cyanobacteria. Its composition changes during the circadian cycle to control KaiC phosphorylation. Autophosphorylates and has a weak ATPase activity; ATPase activity defines the circadian period. The protein is Circadian clock oscillator protein KaiC of Prochlorococcus marinus (strain MIT 9313).